A 948-amino-acid polypeptide reads, in one-letter code: Probable DNA-directed RNA polymerase (948 aa).

Active-site residues include D600, K680, and D853.

It belongs to the phage and mitochondrial RNA polymerase family.

It localises to the mitochondrion. The catalysed reaction is RNA(n) + a ribonucleoside 5'-triphosphate = RNA(n+1) + diphosphate. DNA-dependent RNA polymerase catalyzes the transcription of DNA into RNA using the four ribonucleoside triphosphates as substrates. The polypeptide is Probable DNA-directed RNA polymerase (Podospora anserina (Pleurage anserina)).